Here is a 315-residue protein sequence, read N- to C-terminus: Replication factor C small subunit (315 aa).

Residue 43-50 (GSPGVGKT) coordinates ATP.

Belongs to the activator 1 small subunits family. RfcS subfamily. As to quaternary structure, heteromultimer composed of small subunits (RfcS) and large subunits (RfcL).

Functionally, part of the RFC clamp loader complex which loads the PCNA sliding clamp onto DNA. This chain is Replication factor C small subunit, found in Methanococcus vannielii (strain ATCC 35089 / DSM 1224 / JCM 13029 / OCM 148 / SB).